Here is a 1075-residue protein sequence, read N- to C-terminus: Ataxin-2-like protein (1075 aa).

Methionine 1 carries the N-acetylmethionine modification. The segment covering 1 to 12 has biased composition (low complexity); it reads MLKPQPLQQPSQ. Residues 1 to 115 are disordered; sequence MLKPQPLQQP…KGPPQSPVFE (115 aa). Positions 98 to 121 are interaction with MPL; the sequence is SARGQSTGKGPPQSPVFEGVYNNS. Phosphoserine occurs at positions 103 and 111. Tyrosine 118 is modified (phosphotyrosine). Residues 122–199 form the Sm domain; that stretch reads RMLHFLTAVV…VMLVHFRNVD (78 aa). At lysine 207 the chain carries N6-acetyllysine. Position 238 is a phosphoserine (serine 238). Tyrosine 264 is modified (phosphotyrosine). Serine 306 is modified (phosphoserine). Position 309 is a phosphotyrosine (tyrosine 309). The span at 316-328 shows a compositional bias: basic and acidic residues; the sequence is ENDDGRTEEEKHS. 6 disordered regions span residues 316–521, 551–697, 733–770, 820–849, 865–940, and 1022–1045; these read ENDD…LEPQ, QFKL…SIPV, VSNS…MMQA, SNPR…EQPT, ATQL…SSFP, and PYIG…ADDR. The span at 330 to 342 shows a compositional bias: polar residues; sequence VQRQGSGRESPSL. A phosphoserine mark is found at serine 335 and serine 339. A Glycyl lysine isopeptide (Lys-Gly) (interchain with G-Cter in SUMO2) cross-link involves residue lysine 348. Position 349 is a phosphotyrosine (tyrosine 349). Arginine 361 carries the asymmetric dimethylarginine modification. The segment covering 363–380 has biased composition (low complexity); that stretch reads GVRCSSSRGGRPGLSSLP. A phosphoserine mark is found at serine 391 and serine 409. The span at 421–433 shows a compositional bias: polar residues; the sequence is TLSSPSNRPSGET. Serine 449 is subject to Phosphoserine. Composition is skewed to low complexity over residues 450 to 462 and 471 to 485; these read PKSA…SASC and VPTS…SSVS. Phosphoserine occurs at positions 493 and 496. The segment covering 505 to 516 has biased composition (basic and acidic residues); that stretch reads DVKELSTKEPGR. Residues serine 557, serine 558, serine 559, and serine 563 each carry the phosphoserine modification. Over residues 571-584 the composition is skewed to basic and acidic residues; sequence ILKEEPKGKEKEVD. Serine 594 carries the phosphoserine modification. Residue threonine 632 is modified to Phosphothreonine. A phosphoserine mark is found at serine 634, serine 674, serine 680, and serine 684. Composition is skewed to low complexity over residues 678–694 and 761–770; these read STST…STPS and PASAPPMMQA. Over residues 874–898 the composition is skewed to polar residues; it reads QPATTPTGSQPQSQHAAPSPVQHQA. 2 stretches are compositionally biased toward low complexity: residues 931 to 940 and 1025 to 1037; these read SAQSPQSSFP and GHPQ…QAPG.

This sequence belongs to the ataxin-2 family. In terms of assembly, interacts with MPL/TPOR and EPOR and dissociates after ligand stimulation. Interacts with DDX6, G3BP1, and ATXN2. Interacts with PRMT1. Interacts with CIC and ATXN1. Post-translationally, thrombopoietin triggers the phosphorylation on tyrosine residues in a way that is dependent on MPL C-terminal domain. Asymmetrically dimethylated. Probably methylated by PRMT1. As to expression, expressed at high levels in thymus, lymph node, spleen, fetal kidney and adult testis. Constitutively associated with MPL and EPOR in hematopoietic cells.

The protein resides in the membrane. Its subcellular location is the cytoplasm. The protein localises to the nucleus speckle. It is found in the cytoplasmic granule. Functionally, involved in the regulation of stress granule and P-body formation. This chain is Ataxin-2-like protein (ATXN2L), found in Homo sapiens (Human).